Consider the following 335-residue polypeptide: Dolichyl-diphosphooligosaccharide--protein glycosyltransferase subunit MAGT1 (335 aa).

The N-terminal stretch at 1–29 is a signal peptide; sequence MAAGWWFWCVSVTVAVALLIVCDVPSVSA. The Extracellular portion of the chain corresponds to 30–184; sequence QRKKEMVLSE…DVNIRVIRPP (155 aa). Residues 47–175 form the Thioredoxin domain; the sequence is WTNKRPVIRM…IARWIADRTD (129 aa). A glycan (N-linked (GlcNAc...) asparagine) is linked at N71. A disulfide bond links C87 and C90. A helical membrane pass occupies residues 185–205; that stretch reads NYAGPLMLGLLLAVIGGLVYL. At 206–209 the chain is on the cytoplasmic side; the sequence is RRSN. A helical transmembrane segment spans residues 210–230; it reads MEFLFNKTGWAFAALCFVLAM. Topologically, residues 231–270 are extracellular; sequence TSGQMWNHIRGPPYAHKNPHTGHVNYIHGSSQAQFVAETH. A helical membrane pass occupies residues 271-291; the sequence is IVLLFNGGVTLGMVLLCEAAT. The Cytoplasmic portion of the chain corresponds to 292–300; sequence SDMDIGKRK. A helical membrane pass occupies residues 301–321; that stretch reads IMCVAGIGLVVLFFSWMLSIF. The Extracellular portion of the chain corresponds to 322–335; that stretch reads RSKYHGYPYSFLMS.

The protein belongs to the OST3/OST6 family. Accessory component of the STT3B-containing form of the oligosaccharyltransferase (OST) complex. OST exists in two different complex forms which contain common core subunits RPN1, RPN2, OST48, OST4, DAD1 and TMEM258, either STT3A or STT3B as catalytic subunits, and form-specific accessory subunits. OST can form stable complexes with the Sec61 complex or with both the Sec61 and TRAP complexes. The association of TUSC3 or MAGT1 with the STT3B-containing complex seems to be mutually exclusvice.

It localises to the cell membrane. Its subcellular location is the endoplasmic reticulum. The protein localises to the endoplasmic reticulum membrane. It participates in protein modification; protein glycosylation. Its function is as follows. Accessory component of the STT3B-containing form of the N-oligosaccharyl transferase (OST) complex which catalyzes the transfer of a high mannose oligosaccharide from a lipid-linked oligosaccharide donor to an asparagine residue within an Asn-X-Ser/Thr consensus motif in nascent polypeptide chains. Involved in N-glycosylation of STT3B-dependent substrates. Specifically required for the glycosylation of a subset of acceptor sites that are near cysteine residues; in this function seems to act redundantly with TUSC3. In its oxidized form proposed to form transient mixed disulfides with a glycoprotein substrate to facilitate access of STT3B to the unmodified acceptor site. Also has oxidoreductase-independent functions in the STT3B-containing OST complex possibly involving substrate recognition. Could indirectly play a role in Mg(2+) transport in epithelial cells. The polypeptide is Dolichyl-diphosphooligosaccharide--protein glycosyltransferase subunit MAGT1 (Pongo abelii (Sumatran orangutan)).